The following is a 239-amino-acid chain: Pimeloyl-[acyl-carrier protein] methyl ester esterase (239 aa).

Substrate contacts are provided by residues Trp-20, 77–78 (SM), and 138–142 (FISLQ). Catalysis depends on Ser-77, which acts as the Nucleophile. Residues Asp-192 and His-220 contribute to the active site. Substrate is bound at residue His-220.

Belongs to the AB hydrolase superfamily. Carboxylesterase BioH family. In terms of assembly, monomer.

The protein localises to the cytoplasm. It catalyses the reaction 6-carboxyhexanoyl-[ACP] methyl ester + H2O = 6-carboxyhexanoyl-[ACP] + methanol + H(+). It participates in cofactor biosynthesis; biotin biosynthesis. In terms of biological role, the physiological role of BioH is to remove the methyl group introduced by BioC when the pimeloyl moiety is complete. It allows to synthesize pimeloyl-ACP via the fatty acid synthetic pathway through the hydrolysis of the ester bonds of pimeloyl-ACP esters. The sequence is that of Pimeloyl-[acyl-carrier protein] methyl ester esterase from Legionella pneumophila (strain Corby).